The chain runs to 221 residues: Transmembrane protein 267 (221 aa).

Transmembrane regions (helical) follow at residues 28–48 (ASAG…LPFI), 57–77 (LFDN…VIGL), 86–106 (VILA…MAGS), 121–141 (LHCS…MWAC), and 182–204 (ISYW…LMYL).

The protein resides in the membrane. In Danio rerio (Zebrafish), this protein is Transmembrane protein 267 (tmem267).